The primary structure comprises 583 residues: Hyaluronan synthase-related protein (583 aa).

Residues 1 to 29 are Cytoplasmic-facing; that stretch reads MENTTDPENIPVSKPKYPTIRRILSQTFR. Residues 30–50 form a helical membrane-spanning segment; the sequence is ILLLFSITTAYVLGYQALCHQ. Over 51–52 the chain is Extracellular; it reads GL. A helical membrane pass occupies residues 53 to 73; the sequence is LITFGLYGAAMLLHLLMQGIF. The Cytoplasmic portion of the chain corresponds to 74–393; that stretch reads ANLEIRRIEK…CNAQWWHQHH (320 aa). The helical transmembrane segment at 394–414 threads the bilayer; it reads IWMTYESATGIFFPFFVTAVL. Residues 415–425 are Extracellular-facing; it reads IRLMYSSSLCN. Residues 426–446 form a helical membrane-spanning segment; it reads IVWLFLCIQIMSLLLSLYASW. Over 447-457 the chain is Cytoplasmic; sequence QSKKLSMVLMS. The chain crosses the membrane as a helical span at residues 458 to 478; it reads LYSTLYIIWLLPCQLVALLTI. The Extracellular segment spans residues 479-497; the sequence is AKSDWGTSGRKKVVNNYVP. Residues 498-518 traverse the membrane as a helical segment; that stretch reads LFSLSIWAAVLLGGLCYSMYI. Residues 519 to 535 are Cytoplasmic-facing; it reads GCRKDWSKPQANRELYH. A helical membrane pass occupies residues 536-556; it reads LLYGCAGYMAYWVLMTVIYCV. Topologically, residues 557 to 583 are extracellular; it reads SGSCCKMRSQAVPQTHDITSLSVSLLV.

The protein belongs to the NodC/HAS family.

It is found in the membrane. This Xenopus laevis (African clawed frog) protein is Hyaluronan synthase-related protein (has-rs).